Here is a 180-residue protein sequence, read N- to C-terminus: Cell division protein ZapC (180 aa).

This sequence belongs to the ZapC family. In terms of assembly, interacts directly with FtsZ.

The protein resides in the cytoplasm. In terms of biological role, contributes to the efficiency of the cell division process by stabilizing the polymeric form of the cell division protein FtsZ. Acts by promoting interactions between FtsZ protofilaments and suppressing the GTPase activity of FtsZ. The protein is Cell division protein ZapC of Vibrio vulnificus (strain CMCP6).